A 209-amino-acid chain; its full sequence is Ribosomal RNA large subunit methyltransferase E (209 aa).

Positions 63, 65, 83, 99, and 124 each coordinate S-adenosyl-L-methionine. Residue K164 is the Proton acceptor of the active site.

This sequence belongs to the class I-like SAM-binding methyltransferase superfamily. RNA methyltransferase RlmE family.

It localises to the cytoplasm. The catalysed reaction is uridine(2552) in 23S rRNA + S-adenosyl-L-methionine = 2'-O-methyluridine(2552) in 23S rRNA + S-adenosyl-L-homocysteine + H(+). Functionally, specifically methylates the uridine in position 2552 of 23S rRNA at the 2'-O position of the ribose in the fully assembled 50S ribosomal subunit. The chain is Ribosomal RNA large subunit methyltransferase E from Aliivibrio fischeri (strain ATCC 700601 / ES114) (Vibrio fischeri).